Here is a 174-residue protein sequence, read N- to C-terminus: Streptothricin acetyltransferase (174 aa).

The region spanning 20 to 170 (FIVREVFDVH…AMYWYWFSGA (151 aa)) is the N-acetyltransferase domain.

This sequence belongs to the acetyltransferase family. GNAT subfamily.

It carries out the reaction streptothricin F + acetyl-CoA = N(beta)-acetylstreptothricin F + CoA + H(+). Functionally, involved in resistance to streptothricin, a broad-spectrum antibiotic produced by streptomycetes. Detoxifies streptothricin via acetylation of the beta amino group of the first beta-lysyl moiety of streptothricin. The polypeptide is Streptothricin acetyltransferase (sat-1) (Escherichia coli).